Here is a 370-residue protein sequence, read N- to C-terminus: tRNA-specific 2-thiouridylase MnmA (370 aa).

ATP is bound by residues Gly9 to Ser16 and Met35. Positions Asn107–Asp109 are interaction with target base in tRNA. The active-site Nucleophile is the Cys112. A disulfide bridge links Cys112 with Cys209. Position 137 (Gly137) interacts with ATP. The interval Lys159 to Gln161 is interaction with tRNA. Residue Cys209 is the Cysteine persulfide intermediate of the active site.

It belongs to the MnmA/TRMU family.

It localises to the cytoplasm. It catalyses the reaction S-sulfanyl-L-cysteinyl-[protein] + uridine(34) in tRNA + AH2 + ATP = 2-thiouridine(34) in tRNA + L-cysteinyl-[protein] + A + AMP + diphosphate + H(+). Functionally, catalyzes the 2-thiolation of uridine at the wobble position (U34) of tRNA, leading to the formation of s(2)U34. The sequence is that of tRNA-specific 2-thiouridylase MnmA from Mycoplasma pneumoniae (strain ATCC 29342 / M129 / Subtype 1) (Mycoplasmoides pneumoniae).